A 415-amino-acid polypeptide reads, in one-letter code: Probable tRNA pseudouridine synthase D (415 aa).

The active-site Nucleophile is aspartate 83. Positions 158–378 (GFPNYFGYQR…PGRRRELLIR (221 aa)) constitute a TRUD domain.

This sequence belongs to the pseudouridine synthase TruD family.

It carries out the reaction uridine(13) in tRNA = pseudouridine(13) in tRNA. Functionally, could be responsible for synthesis of pseudouridine from uracil-13 in transfer RNAs. This chain is Probable tRNA pseudouridine synthase D, found in Thermococcus gammatolerans (strain DSM 15229 / JCM 11827 / EJ3).